Consider the following 823-residue polypeptide: Leucine--tRNA ligase (823 aa).

The 'HIGH' region signature appears at 42–52 (PYPSGTLHMGH). The 'KMSKS' region motif lies at 575 to 579 (KMSKS). Lys-578 is an ATP binding site.

This sequence belongs to the class-I aminoacyl-tRNA synthetase family.

It localises to the cytoplasm. It catalyses the reaction tRNA(Leu) + L-leucine + ATP = L-leucyl-tRNA(Leu) + AMP + diphosphate. The chain is Leucine--tRNA ligase from Legionella pneumophila (strain Corby).